The primary structure comprises 1865 residues: Dedicator of cytokinesis protein 1 (1865 aa).

The 62-residue stretch at 9-70 (REEKYGVAFY…PASYIHLKEA (62 aa)) folds into the SH3 domain. One can recognise a C2 DOCK-type domain in the interval 425 to 609 (RNDIYVTLVQ…DSFQISTLVC (185 aa)). In terms of domain architecture, DOCKER spans 1207 to 1617 (YKEIEREEMY…VEKEYGVRIM (411 aa)). Disordered stretches follow at residues 1619 to 1716 (SSLD…EFKP) and 1732 to 1865 (TISP…GIVQ). Low complexity predominate over residues 1639 to 1666 (PSSSRPLSVASVSSLSSDSTPSRPGSDG). The span at 1680–1694 (RSQDKLDKDDLEKEK) shows a compositional bias: basic and acidic residues. Ser1681 carries the phosphoserine modification. The phosphoinositide-binding stretch occupies residues 1687-1695 (KDDLEKEKK). Residues 1695–1704 (KDKKKEKRNS) are compositionally biased toward basic residues. Over residues 1705-1716 (KHQEIFEKEFKP) the composition is skewed to basic and acidic residues. Phosphoserine is present on residues Ser1743, Ser1751, Ser1756, Ser1761, and Ser1764. Low complexity predominate over residues 1756 to 1766 (SVSPSSPSSQQ). Residues Thr1767 and Thr1772 each carry the phosphothreonine modification. The tract at residues 1793–1819 (ADVADVPPPLPLKGSVADYGNLMENQD) is interaction with NCK2 second and third SH3 domain (minor). The short motif at 1799–1805 (PPPLPLK) is the SH3-binding; interaction with CRK element. Residues 1820–1836 (LLGSPTPPPPPPHQRHL) form an interaction with NCK2 third SH3 domain (major) region. Residues 1824 to 1851 (PTPPPPPPHQRHLPPPLPSKTPPPPPPK) show a composition bias toward pro residues. The tract at residues 1837–1852 (PPPLPSKTPPPPPPKT) is interaction with NCK2 (minor). Residues 1838–1843 (PPLPSK) carry the SH3-binding; interaction with CRK motif. The span at 1855-1865 (KQASVDSGIVQ) shows a compositional bias: polar residues. Ser1858 is subject to Phosphoserine.

Belongs to the DOCK family. In terms of assembly, interacts with the SH3 domains of CRK and NCK2 via multiple sites. Interacts with nucleotide-free RAC1 via its DOCKER domain. Interacts with ELMO1, ELMO2 and probably ELMO3 via its SH3 domain. Interacts with ADGRB1. Identified in a complex with AUTS2 and ELMO2. In terms of tissue distribution, highly expressed in placenta, lung, kidney, pancreas and ovary. Expressed at intermediate level in thymus, testes and colon.

It is found in the cytoplasm. The protein resides in the membrane. In terms of biological role, involved in cytoskeletal rearrangements required for phagocytosis of apoptotic cells and cell motility. Along with DOCK1, mediates CRK/CRKL regulation of epithelial and endothelial cell spreading and migration on type IV collagen. Functions as a guanine nucleotide exchange factor (GEF), which activates Rac Rho small GTPases by exchanging bound GDP for free GTP. Its GEF activity may be enhanced by ELMO1. The protein is Dedicator of cytokinesis protein 1 (DOCK1) of Homo sapiens (Human).